A 105-amino-acid chain; its full sequence is Small ribosomal subunit protein eS24 (105 aa).

This sequence belongs to the eukaryotic ribosomal protein eS24 family.

The chain is Small ribosomal subunit protein eS24 from Haloquadratum walsbyi (strain DSM 16790 / HBSQ001).